A 167-amino-acid polypeptide reads, in one-letter code: Lipoprotein signal peptidase (167 aa).

3 helical membrane passes run Phe8–Met28, Phe61–Trp81, and Phe93–Tyr113. Catalysis depends on residues Asp117 and Asp136. The chain crosses the membrane as a helical span at residues Ile126–Ile146.

The protein belongs to the peptidase A8 family.

Its subcellular location is the cell inner membrane. The catalysed reaction is Release of signal peptides from bacterial membrane prolipoproteins. Hydrolyzes -Xaa-Yaa-Zaa-|-(S,diacylglyceryl)Cys-, in which Xaa is hydrophobic (preferably Leu), and Yaa (Ala or Ser) and Zaa (Gly or Ala) have small, neutral side chains.. Its pathway is protein modification; lipoprotein biosynthesis (signal peptide cleavage). Functionally, this protein specifically catalyzes the removal of signal peptides from prolipoproteins. The protein is Lipoprotein signal peptidase of Bartonella quintana (strain Toulouse) (Rochalimaea quintana).